We begin with the raw amino-acid sequence, 213 residues long: Germin-like protein 8-14 (213 aa).

An N-terminal signal peptide occupies residues 1–23; the sequence is MAKAVMMLPVLLSFLLLPFSSMA. Cysteine 29 and cysteine 44 are disulfide-bonded. Residues 56 to 203 enclose the Cupin type-1 domain; that stretch reads HGLAAAGNTS…VTFLDDAQVK (148 aa). Asparagine 63 carries an N-linked (GlcNAc...) asparagine glycan. 4 residues coordinate Mn(2+): histidine 104, histidine 106, glutamate 111, and histidine 151.

It belongs to the germin family. In terms of assembly, oligomer (believed to be a pentamer but probably hexamer). Phosphorylated on threonine residue.

It is found in the secreted. The protein localises to the extracellular space. It localises to the apoplast. Its function is as follows. May play a role in plant defense. Probably has no oxalate oxidase activity even if the active site is conserved. This Oryza sativa subsp. japonica (Rice) protein is Germin-like protein 8-14 (GER5).